A 79-amino-acid polypeptide reads, in one-letter code: Protein RALF-like 35 (79 aa).

The first 29 residues, Met-1 to Gly-29, serve as a signal peptide directing secretion. Disulfide bonds link Cys-45/Cys-52 and Cys-66/Cys-72. N-linked (GlcNAc...) asparagine glycosylation occurs at Asn-68.

Belongs to the plant rapid alkalinization factor (RALF) family.

Its subcellular location is the secreted. Its function is as follows. Cell signaling peptide that may regulate plant stress, growth, and development. Mediates a rapid alkalinization of extracellular space by mediating a transient increase in the cytoplasmic Ca(2+) concentration leading to a calcium-dependent signaling events through a cell surface receptor and a concomitant activation of some intracellular mitogen-activated protein kinases. This Arabidopsis thaliana (Mouse-ear cress) protein is Protein RALF-like 35.